The primary structure comprises 516 residues: uncharacterized protein (516 aa).

Ser21 is modified (phosphoserine). The tract at residues 46–74 (DLQSSMEDSNKANGNGEETTDGAEGVLQT) is disordered. The segment covering 47–62 (LQSSMEDSNKANGNGE) has biased composition (polar residues). WD repeat units lie at residues 182-227 (TFPL…AVYP), 252-292 (YHTD…CVKS), 295-335 (YHSD…APSS), 337-377 (QVTS…KSVW), 381-421 (AHDG…PKMV), and 426-468 (LDVG…GVRK). Over residues 482 to 493 (ERIVQLEDRGAG) the composition is skewed to basic and acidic residues. The disordered stretch occupies residues 482–516 (ERIVQLEDRGAGEDSSDDDDYEDIEDDDDQDAEMS). Residues 495–516 (DSSDDDDYEDIEDDDDQDAEMS) show a composition bias toward acidic residues. Phosphoserine is present on residues Ser496 and Ser497.

It is found in the cytoplasm. It localises to the nucleus. Its subcellular location is the nucleolus. This is an uncharacterized protein from Schizosaccharomyces pombe (strain 972 / ATCC 24843) (Fission yeast).